A 152-amino-acid polypeptide reads, in one-letter code: Endoribonuclease YbeY (152 aa).

3 residues coordinate Zn(2+): His117, His121, and His127.

This sequence belongs to the endoribonuclease YbeY family. Requires Zn(2+) as cofactor.

It is found in the cytoplasm. Functionally, single strand-specific metallo-endoribonuclease involved in late-stage 70S ribosome quality control and in maturation of the 3' terminus of the 16S rRNA. The chain is Endoribonuclease YbeY from Sulfurihydrogenibium sp. (strain YO3AOP1).